A 904-amino-acid chain; its full sequence is MLIPSKLSRPVRLQNTVIRDRLLAKLASTANYRLTLVNCPAGYGKTTLVAQWAAGKSDLGWYSLDESDNQPERFASYLIAALQLASGGHCVKSEALSQKHQYASLSALFAQLFIELSDWHQPLYLVIDDYHLITNDVIHEAMRFFLRHQPENLTLILLSRTLPPLGIANLRVRDQLLEMGTQQLAFTHQEAKQFFDCRLVSPMESQDSSRLCDEVEGWATALQLIALSARQSNSSAQQSAKRLAGLNASHLSDYLVDEVLDHVDAEARAFLLRCSVLRSMNDALIVRLTGEDNGQQRLEELERQGLFIHRMDDSGEWFCFHPLFATFLRQRCQWELALELPGLHRAAAEGWLALGYPAEAIHHALAASDVSMLRDILLQHAWSLFHHSELALLEECLNALPYERLIQNPKLALLQAWLAQSQHRYSEVNTLLERAEQAMRDQKIEVDRTLEAEFDALRAQVAINAGKPEEAERLATEALKFLPLSSYYSRIVATSVTGEVHHCKGELARALPMMQQTEQMARRHQAYHYALWALLQQSEILIAQGFLQAAFETQDKAFELVREQHLEQLPMHEFLLRIRSQILWSWSRLDEAEDAAREGLKILANYQPQQQLQCIAMLAKCSLARGDLDNANAHMQRCEVLLHGTQYHRDWLTNADKPRVIHWQMTGDTTAAAQWLRQTEKPGMADNHFMQGQWRNIARVQIMLGQYEEAEVVLDELNENARRLRLVSDLNRNLLLSNQLYWQMERKSDAQKVLMEALSLASRTGFISHFVIEGEAMAQQLRQLIQLNTLPELENHRAQRILRDINQHHRHKFAHFDENFVDKLLTHPQVPELIRTSPLTQREWQVLGLIYSGYSNDQIAGELAVAATTIKTHIRNLYQKLGVAHRQEAVQQAQQLLKMMGYGA.

39 to 46 (CPAGYGKT) contacts ATP. The region spanning 832-897 (ELIRTSPLTQ…EAVQQAQQLL (66 aa)) is the HTH luxR-type domain. A DNA-binding region (H-T-H motif) is located at residues 856 to 875 (NDQIAGELAVAATTIKTHIR).

It belongs to the MalT family. In terms of assembly, monomer in solution. Oligomerizes to an active state in the presence of the positive effectors ATP and maltotriose.

Its activity is regulated as follows. Activated by ATP and maltotriose, which are both required for DNA binding. Positively regulates the transcription of the maltose regulon whose gene products are responsible for uptake and catabolism of malto-oligosaccharides. Specifically binds to the promoter region of its target genes, recognizing a short DNA motif called the MalT box. The protein is HTH-type transcriptional regulator MalT of Serratia proteamaculans (strain 568).